A 1010-amino-acid chain; its full sequence is 2-oxoglutarate dehydrogenase-like, mitochondrial (1010 aa).

The transit peptide at 1-73 (MSQLRLLPSR…RSVHKSWDSF (73 aa)) directs the protein to the mitochondrion. Ca(2+)-binding residues include histidine 130, aspartate 143, and aspartate 145. The thiamine diphosphate site is built by arginine 299, aspartate 398, asparagine 431, isoleucine 433, and glutamine 663. Mg(2+)-binding residues include aspartate 398, asparagine 431, and isoleucine 433.

This sequence belongs to the alpha-ketoglutarate dehydrogenase family. As to quaternary structure, the OGDHC complex comprises multiple copies of three catalytic enzyme components, the 2-oxoglutarate dehydrogenase (OGDH/E1), the dihydrolipoamide dehydrogenase (DLST/E2) and the dihydrolipoamide dehydrogenase (DLD/E3). OGDHL/E1-like isoenzyme may replace OGDH in the OGDHC complex in the brain. The presence of either ODGH/E1 or ODGHL/E1-like isoenzyme in the complex may depend on its tissular distribution. Thiamine diphosphate is required as a cofactor. Mg(2+) serves as cofactor.

The protein resides in the mitochondrion matrix. It catalyses the reaction N(6)-[(R)-lipoyl]-L-lysyl-[protein] + 2-oxoglutarate + H(+) = N(6)-[(R)-S(8)-succinyldihydrolipoyl]-L-lysyl-[protein] + CO2. 2-oxoglutarate dehydrogenase (E1-like) component of the 2-oxoglutarate dehydrogenase multienzyme complex (OGDHC) which mediates the decarboxylation of alpha-ketoglutarate in the tricarboxylic acid cycle. The OGDHC complex catalyzes the overall conversion of 2-oxoglutarate to succinyl-CoA and CO(2) while reducing NAD(+) to NADH. The OGDHC complex is mainly active in the mitochondrion. Involved in the inhibition of cell proliferation and in apoptosis. The sequence is that of 2-oxoglutarate dehydrogenase-like, mitochondrial (OGDHL) from Pongo abelii (Sumatran orangutan).